The chain runs to 333 residues: Protein amalgam (333 aa).

A signal peptide spans 1–23 (MARLRLLIGLIFCLAISLDSVLS). Residues 25 to 128 (PVISQISKDV…VLVSATEKVT (104 aa)) form the Ig-like V-type domain. Residues Asn45 and Asn86 are each glycosylated (N-linked (GlcNAc...) asparagine). 3 cysteine pairs are disulfide-bonded: Cys46/Cys117, Cys161/Cys208, and Cys251/Cys307. Ig-like C2-type domains follow at residues 139–223 (PVIA…RLIR) and 230–323 (PQIA…LHLF). Asn308 is a glycosylation site (N-linked (GlcNAc...) asparagine).

It is found in the cell membrane. The polypeptide is Protein amalgam (Ama) (Drosophila melanogaster (Fruit fly)).